Reading from the N-terminus, the 2333-residue chain is Genome polyprotein (2333 aa).

A Peptidase C28 domain is found at Met1 to Lys201. Over Met1–Leu1481 the chain is Cytoplasmic. Catalysis depends on for leader protease activity residues Cys51, His148, and Asp163. Disordered regions lie at residues Gln197–Asn218 and Gln238–Asn265. Residue Gly202 is the site of N-myristoyl glycine; by host attachment. Composition is skewed to polar residues over residues Gly204–Asn218 and Gln238–Gly251. Residues Ser252 to Asn265 are compositionally biased toward low complexity. The interval Ala789–Tyr797 is antigenic epitope. Positions Arg869–Asp871 match the Cell attachment site motif. Residues Asn1190 to Asp1354 form the SF3 helicase domain. Gly1218–Ser1225 serves as a coordination point for ATP. An intramembrane segment occupies Lys1482 to Ile1502. Over Arg1503–Ala2333 the chain is Cytoplasmic. Basic and acidic residues-rich tracts occupy residues Lys1530–Pro1539 and Phe1550–Glu1564. The interval Lys1530–Pro1585 is disordered. The span at Glu1567–Glu1579 shows a compositional bias: low complexity. O-(5'-phospho-RNA)-tyrosine occurs at positions 1582, 1605, and 1629. The Peptidase C3 domain occupies Ala1653 to Leu1849. Catalysis depends on His1696, which acts as the For protease 3C activity; Proton donor/acceptor. Catalysis depends on for protease 3C activity residues Asp1734 and Cys1813. The Nuclear localization signal motif lies at Met1879–Thr1887. In terms of domain architecture, RdRp catalytic spans Arg2097–Ala2215. Residue Asp2201 is the For RdRp activity of the active site.

Belongs to the picornaviruses polyprotein family. Interacts with host ISG15. In terms of assembly, interacts (via R-G-D motif) with host ITGAV/ITGB6. Interacts with host MAVS; this interaction inhibits binding of host TRAF3 to MAVS, thereby suppressing interferon-mediated responses. As to quaternary structure, forms homooligomers. Homohexamer. Interacts with host VIM. Interacts with host BECN1. In terms of assembly, interacts with host DCTN3. As to quaternary structure, interacts with RNA-dependent RNA polymerase; this interaction allows 3B-1 to binds 2 polymerases and act as a primer. It also allows the recruitment of the RNA-dependent RNA polymerase to host membranes. Interacts with RNA-dependent RNA polymerase; this interaction allows 3B-2 to act as a primer. In terms of assembly, interacts with RNA-dependent RNA polymerase; this interaction allows 3B-3 to act as a primer. As to quaternary structure, interacts with 3B-1; this interaction allows 3B-1 to binds 2 polymerases and act as a primer. It also allows the recruitment of the RNA-dependent RNA polymerase to host membranes. Interacts with 3B-2; this interaction allows 3B-2 to act as a primer. Interacts with 3B-3; this interaction allows 3B-3 to act as a primer. Post-translationally, removes six residues from its own C-terminus, generating sLb(pro). Specific enzymatic cleavages in vivo by the viral proteases yield a variety of precursors and mature proteins. The polyprotein seems to be cotranslationally cleaved at the 2A/2B junction by a ribosomal skip from one codon to the next without formation of a peptide bond. This process would release the L-P1-2A peptide from the translational complex. In terms of processing, during virion maturation, immature virions are rendered infectious following cleavage of VP0 into VP4 and VP2. This maturation seems to be an autocatalytic event triggered by the presence of RNA in the capsid and is followed by a conformational change of the particle. Post-translationally, myristoylation is required during RNA encapsidation and formation of the mature virus particle. Uridylylated by the polymerase and covalently linked to the 5'-end of genomic RNA. These uridylylated forms act as a nucleotide-peptide primer for the polymerase.

It is found in the host nucleus. The protein localises to the host cytoplasm. It localises to the virion. The protein resides in the host endoplasmic reticulum membrane. Its subcellular location is the host cytoplasmic vesicle membrane. The catalysed reaction is Autocatalytically cleaves itself from the polyprotein of the foot-and-mouth disease virus by hydrolysis of a Lys-|-Gly bond, but then cleaves host cell initiation factor eIF-4G at bonds -Gly-|-Arg- and -Lys-|-Arg-.. The enzyme catalyses a ribonucleoside 5'-triphosphate + H2O = a ribonucleoside 5'-diphosphate + phosphate + H(+). It catalyses the reaction RNA(n) + a ribonucleoside 5'-triphosphate = RNA(n+1) + diphosphate. It carries out the reaction Selective cleavage of Gln-|-Gly bond in the poliovirus polyprotein. In other picornavirus reactions Glu may be substituted for Gln, and Ser or Thr for Gly.. Its function is as follows. Autocatalytically cleaves itself from the polyprotein at the L/VP0 junction. Also cleaves the host translation initiation factors EIF4G1 and EIF4G3, in order to shut off the capped cellular mRNA transcription. Plays a role in counteracting host innate antiviral response using diverse mechanisms. Possesses a deubiquitinase activity acting on both 'Lys-48' and 'Lys-63'-linked polyubiquitin chains. In turn, inhibits the ubiquitination and subsequent activation of key signaling molecules of type I IFN response such as host RIGI, TBK1, TRAF3 and TRAF6. Inhibits host NF-kappa-B activity by inducing a decrease in RELA mRNA levels. Cleaves a peptide bond in the C-terminus of host ISG15, resulting in the damaging of this modifier that can no longer be attached to target proteins. Also cleaves host G3BP1 and G3BP2 in order to inhibit cytoplasmic stress granules assembly. Lies on the inner surface of the capsid shell. After binding to the host receptor, the capsid undergoes conformational changes. Capsid protein VP4 is released, capsid protein VP1 N-terminus is externalized, and together, they shape a pore in the host membrane through which the viral genome is translocated into the host cell cytoplasm. After genome has been released, the channel shrinks. Functionally, forms an icosahedral capsid of pseudo T=3 symmetry with capsid proteins VP1 and VP3. The capsid is composed of 60 copies of each capsid protein organized in the form of twelve pentamers and encloses the viral positive strand RNA genome. Upon acidifcation in the endosome, dissociates into pentamers. In terms of biological role, forms an icosahedral capsid of pseudo T=3 symmetry with capsid proteins VP0 and VP3. The capsid is composed of 60 copies of each capsid protein organized in the form of twelve pentamers and encloses the viral positive strand RNA genome. Upon acidifcation in the endosome, dissociates into pentamers. Its function is as follows. Forms an icosahedral capsid of pseudo T=3 symmetry with capsid proteins VP2 and VP3. The capsid is composed of 60 copies of each capsid protein organized in the form of twelve pentamers and encloses the viral positive strand RNA genome. Mediates cell entry by attachment to an integrin receptor, usually host ITGAV/ITGB6. In addition, targets host MAVS to suppress type I IFN pathway. Upon acidifcation in the endosome, dissociates into pentamers. Mediates self-processing of the polyprotein by a translational effect termed 'ribosome skipping'. Mechanistically, 2A-mediated cleavage occurs between the C-terminal glycine and the proline of the downstream protein 2B. In the case of foot-and-mouth disease virus, the 2A oligopeptide is post-translationally 'trimmed' from the C-terminus of the upstream protein 1D by 3C proteinase. Functionally, plays an essential role in the virus replication cycle by acting as a viroporin. Creates a pore in the host endoplasmic reticulum and as a consequence releases Ca2+ in the cytoplasm of infected cell. In turn, high levels of cytoplasmic calcium may trigger membrane trafficking and transport of viral ER-associated proteins to viroplasms, sites of viral genome replication. In terms of biological role, associates with and induces structural rearrangements of intracellular membranes. Triggers host autophagy by interacting with host BECN1 and thereby promotes viral replication. Participates in viral replication and interacts with host DHX9. Displays RNA-binding, nucleotide binding and NTPase activities. May play a role in virion morphogenesis and viral RNA encapsidation by interacting with the capsid protein VP3. Its function is as follows. Plays important roles in virus replication, virulence and host range. Cooperates with host DDX56 to inhibit IRF3 nuclear translocation and subsequent type I interferon production. Covalently linked to the 5'-end of both the positive-strand and negative-strand genomic RNAs. Acts as a genome-linked replication primer. Functionally, cysteine protease that generates mature viral proteins from the precursor polyprotein. In addition to its proteolytic activity, binds to viral RNA and thus influences viral genome replication. RNA and substrate bind cooperatively to the protease. In terms of biological role, RNA-directed RNA polymerase 3D-POL replicates genomic and antigenomic RNA by recognizing replications specific signals. Covalently attaches UMP to a tyrosine of VPg, which is used to prime RNA synthesis. The positive stranded RNA genome is first replicated at virus induced membranous vesicles, creating a dsRNA genomic replication form. This dsRNA is then used as template to synthesize positive stranded RNA genomes. ss(+)RNA genomes are either translated, replicated or encapsidated. This is Genome polyprotein from Bos taurus (Bovine).